The chain runs to 668 residues: Protein brown (668 aa).

Topologically, residues 1–412 are cytoplasmic; it reads MPMDEGDAQG…TEDLANIRSG (412 aa). An ABC transporter domain is found at 31–328; the sequence is YSFWNECRKQ…FTEGFMQPKN (298 aa). An ATP-binding site is contributed by 63-70; the sequence is GGSGAGKT. Residues 413–433 traverse the membrane as a helical segment; it reads LIGFGFFMTTAVTLSLMYSGV. Over 434 to 453 the chain is Extracellular; that stretch reads GGLTQRTVQDVGGSIFMLSN. A helical membrane pass occupies residues 454-474; sequence EMIFTFSYGVTYIFPAALPII. The Cytoplasmic segment spans residues 475–490; that stretch reads RREVAEGTYSLSAYYV. The chain crosses the membrane as a helical span at residues 491-511; the sequence is ALVLSFVPVAFFKGYMFLSVI. At 512–524 the chain is on the extracellular side; that stretch reads YASIYYTRGFLLY. Residues 525–545 traverse the membrane as a helical segment; that stretch reads ITMGFLMSLSAIAAVGYGVFL. Residues 546-561 are Cytoplasmic-facing; the sequence is SSLFETDKMASECAAP. The chain crosses the membrane as a helical span at residues 562–582; it reads FDLIFLIFGGTYMNVDSVPLL. The Extracellular segment spans residues 583–637; that stretch reads KYFSLFFYSNEALMYNFWIDIDNIACXVNDEHPCCQTGLEVLQQASFRTADYTFW. Residues 638-658 form a helical membrane-spanning segment; that stretch reads LDCASLLVVALVFHIVSFTLI. The Cytoplasmic portion of the chain corresponds to 659–668; the sequence is RRYINRSGYY.

Belongs to the ABC transporter superfamily. ABCG family. Eye pigment precursor importer (TC 3.A.1.204) subfamily. In terms of assembly, may form a heterodimer with w/white. In terms of tissue distribution, expressed in eyes.

Its subcellular location is the membrane. It catalyses the reaction guanine(out) + ATP + H2O = guanine(in) + ADP + phosphate + H(+). It carries out the reaction riboflavin(in) + ATP + H2O = riboflavin(out) + ADP + phosphate + H(+). The enzyme catalyses (6S)-5,6,7,8-tetrahydrofolate(out) + ATP + H2O = (6S)-5,6,7,8-tetrahydrofolate(in) + ADP + phosphate + H(+). ATP-dependent transporter of the ATP-binding cassette (ABC) family which transports various molecules including bioamines, neurotransmitters and metabolic intermediates. In the eye and probably in association with w/white, required for the transport of the eye red pigment precursor, guanine, into pigment cell granules. In Malpighian tubules, involved in guanine uptake. Probably in association with w/white, involved in aging-induced intestinal stem cell proliferation in the midgut by regulating tetrahydrofolate transport. The protein is Protein brown of Drosophila virilis (Fruit fly).